We begin with the raw amino-acid sequence, 354 residues long: 3'-hydroxy-N-methyl-(S)-coclaurine 4'-O-methyltransferase 1 (354 aa).

Residue D223 coordinates S-adenosyl-L-methionine. Residue H261 is the Proton acceptor of the active site.

It belongs to the class I-like SAM-binding methyltransferase superfamily. Cation-independent O-methyltransferase family. COMT subfamily. As to expression, expressed in roots, stems, leaves and flowers. Restricted to sieve elements of the phloem adjacent or proximal to laticifers.

It carries out the reaction (S)-3'-hydroxy-N-methylcoclaurine + S-adenosyl-L-methionine = (S)-reticuline + S-adenosyl-L-homocysteine + H(+). It functions in the pathway alkaloid biosynthesis; (S)-reticuline biosynthesis; (S)-reticuline from (S)-norcoclaurine: step 4/4. Its function is as follows. Involved in the biosynthesis of benzylisoquinoline alkaloids. Catalyzes the transfer of the methyl group to the 4'-hydroxyl group of 3'-hydroxy-N-methylcoclaurine to form reticuline. Also involved in the papaverine biosynthesis. The sequence is that of 3'-hydroxy-N-methyl-(S)-coclaurine 4'-O-methyltransferase 1 from Papaver somniferum (Opium poppy).